Here is an 884-residue protein sequence, read N- to C-terminus: Cadherin-1 (884 aa).

The N-terminal stretch at 1-23 (MGARCRSFSALLLLLQVSSWLCQ) is a signal peptide. The propeptide occupies 24-156 (ELEPESCSPG…VYPGLRRQKR (133 aa)). The interval 119–139 (KSMGHHHHRHHHRDPASESNP) is disordered. Residues 121–131 (MGHHHHRHHHR) show a composition bias toward basic residues. Cadherin domains lie at 157–264 (DWVI…RPEF), 265–377 (TQEV…APVF), 378–488 (NPST…APIF), 489–595 (MPAE…DNAP), and 596–699 (IPEP…NCMK). The Extracellular portion of the chain corresponds to 157–709 (DWVIPPISCP…AGIVAAGLQV (553 aa)). Asp259 is a Ca(2+) binding site. O-linked (Man...) serine glycosylation is found at Ser282 and Ser287. Asp290 provides a ligand contact to Ca(2+). Residues Thr360, Thr472, Thr474, and Thr511 are each glycosylated (O-linked (Man...) threonine). Asn560 is a glycosylation site (N-linked (GlcNAc...) asparagine). 3 O-linked (Man...) threonine glycosylation sites follow: Thr578, Thr580, and Thr582. An N-linked (GlcNAc...) asparagine glycan is attached at Asn639. A helical transmembrane segment spans residues 710 to 733 (PAILGILGGILALLILILLLLLFL). At 734–884 (RRRTVVKEPL…ADMYGGGEDD (151 aa)) the chain is on the cytoplasmic side. Positions 749–808 (DTRDNVYYYDEEGGGEEDQDFDLSQLHRGLDARPEVTRNDVAPTLMSVPQYRPRPANPDE) are disordered. A phosphotyrosine; by SRC mark is found at Tyr755, Tyr756, and Tyr757. A compositionally biased stretch (acidic residues) spans 757-769 (YDEEGGGEEDQDF). The interval 760–771 (EGGGEEDQDFDL) is required for binding CTNND1 and PSEN1. Ser772 bears the Phosphoserine mark. A compositionally biased stretch (basic and acidic residues) spans 776–786 (RGLDARPEVTR). Residues Ser795, Ser840, Ser842, and Ser848 each carry the phosphoserine modification. The required for binding alpha, beta and gamma catenins stretch occupies residues 813–884 (IDENLKAADS…ADMYGGGEDD (72 aa)).

In terms of assembly, homodimer; disulfide-linked. Component of an E-cadherin/ catenin adhesion complex composed of at least E-cadherin/CDH1, beta-catenin/CTNNB1 or gamma-catenin/JUP, and potentially alpha-catenin/CTNNA1; the complex is located to adherens junctions. Found in a complex composed of CDH1, RAP1A and PKP3; PKP3 acts as a scaffold protein within the complex, the complex is required for CDH1 localization to mature desmosome cell junctions. Interacts with the TRPV4 and CTNNB1 complex. Interacts with CTNND1. The stable association of CTNNA1 is controversial as CTNNA1 was shown not to bind to F-actin when assembled in the complex. Alternatively, the CTNNA1-containing complex may be linked to F-actin by other proteins such as LIMA1. Interaction with PSEN1, cleaves CDH1 resulting in the disassociation of cadherin-based adherens junctions (CAJs). Interacts with AJAP1 and DLGAP5. Interacts with TBC1D2. Interacts with LIMA1. Interacts with CAV1. Interacts with PIP5K1C. Interacts with RAB8B. Interacts with DDR1; this stabilizes CDH1 at the cell surface and inhibits its internalization. Interacts with RAPGEF2. Interacts with KLRG1. Forms a ternary complex composed of ADAM10, CADH1 and EPHA4; within the complex, CADH1 is cleaved by ADAM10 which disrupts adherens junctions. Interacts with SPEF1. Interacts with CTNNB1 and PKP2. Interacts with AMOTL2; the interaction may facilitate binding of radial actin fibers to cell junction complexes. Interacts with DSG3; the interaction is required for CDH1 localization to developing adherens junctions. Post-translationally, during apoptosis or with calcium influx, cleaved by a membrane-bound metalloproteinase (ADAM10), PS1/gamma-secretase and caspase-3. Processing by the metalloproteinase, induced by calcium influx, causes disruption of cell-cell adhesion and the subsequent release of beta-catenin into the cytoplasm. The residual membrane-tethered cleavage product is rapidly degraded via an intracellular proteolytic pathway. Cleavage by caspase-3 releases the cytoplasmic tail resulting in disintegration of the actin microfilament system. The gamma-secretase-mediated cleavage promotes disassembly of adherens junctions. During development of the cochlear organ of Corti, cleavage by ADAM10 at adherens junctions promotes pillar cell separation. In terms of processing, O-glycosylated. O-manosylated by TMTC1, TMTC2, TMTC3 or TMTC4. Ser-287 and Thr-511 are O-manosylated by TMTC2 or TMTC4 but not TMTC1 or TMTC3. N-glycosylation at Asn-639 is essential for expression, folding and trafficking. Addition of bisecting N-acetylglucosamine by MGAT3 modulates its cell membrane location. Post-translationally, ubiquitinated by a SCF complex containing SKP2, which requires prior phosphorylation by CK1/CSNK1A1. Ubiquitinated by CBLL1/HAKAI, requires prior phosphorylation at Tyr-756. As to expression, expressed in inner and outer pillar cells of the organ of Corti (at protein level). Expressed in granuloma macrophages (at protein level). Expressed in the epidermal keratinocytes of the skin from birth (at protein level). Expressed in non-neural epithelial tissues.

The protein localises to the cell junction. The protein resides in the adherens junction. It is found in the cell membrane. It localises to the endosome. Its subcellular location is the golgi apparatus. The protein localises to the trans-Golgi network. The protein resides in the cytoplasm. It is found in the desmosome. Functionally, cadherins are calcium-dependent cell adhesion proteins. They preferentially interact with themselves in a homophilic manner in connecting cells; cadherins may thus contribute to the sorting of heterogeneous cell types. CDH1 is involved in mechanisms regulating cell-cell adhesions, mobility and proliferation of epithelial cells. Promotes organization of radial actin fiber structure and cellular response to contractile forces, via its interaction with AMOTL2 which facilitates anchoring of radial actin fibers to CDH1 junction complexes at the cell membrane. Plays a role in the early stages of desmosome cell-cell junction formation via facilitating the recruitment of DSG2 and DSP to desmosome plaques. Has a potent invasive suppressor role. It is a ligand for integrin alpha-E/beta-7. Its function is as follows. E-Cad/CTF2 promotes non-amyloidogenic degradation of Abeta precursors. Has a strong inhibitory effect on APP C99 and C83 production. In terms of biological role, (Microbial infection) Does not function as a receptor for L.monocytogenes internalin A (InlA); mutating a single surface-exposed residue confers receptor activity to this protein and promotes uptake of the bacteria. This chain is Cadherin-1 (Cdh1), found in Mus musculus (Mouse).